The following is a 364-amino-acid chain: Aminomethyltransferase (364 aa).

The protein belongs to the GcvT family. As to quaternary structure, the glycine cleavage system is composed of four proteins: P, T, L and H.

The enzyme catalyses N(6)-[(R)-S(8)-aminomethyldihydrolipoyl]-L-lysyl-[protein] + (6S)-5,6,7,8-tetrahydrofolate = N(6)-[(R)-dihydrolipoyl]-L-lysyl-[protein] + (6R)-5,10-methylene-5,6,7,8-tetrahydrofolate + NH4(+). The glycine cleavage system catalyzes the degradation of glycine. The chain is Aminomethyltransferase from Escherichia coli O127:H6 (strain E2348/69 / EPEC).